The following is an 85-amino-acid chain: RNA-binding protein Hfq (85 aa).

A Sm domain is found at 9 to 68 (DPFLNALRRERVPVSIYLVNGIKLQGQVESFDQFVILLKNTVSQMVYKHAISTVVPARPF).

The protein belongs to the Hfq family. In terms of assembly, homohexamer.

In terms of biological role, RNA chaperone that binds small regulatory RNA (sRNAs) and mRNAs to facilitate mRNA translational regulation in response to envelope stress, environmental stress and changes in metabolite concentrations. Also binds with high specificity to tRNAs. The protein is RNA-binding protein Hfq of Shewanella frigidimarina (strain NCIMB 400).